We begin with the raw amino-acid sequence, 240 residues long: tRNA1(Val) (adenine(37)-N6)-methyltransferase (240 aa).

The protein belongs to the methyltransferase superfamily. tRNA (adenine-N(6)-)-methyltransferase family.

It is found in the cytoplasm. The catalysed reaction is adenosine(37) in tRNA1(Val) + S-adenosyl-L-methionine = N(6)-methyladenosine(37) in tRNA1(Val) + S-adenosyl-L-homocysteine + H(+). Its function is as follows. Specifically methylates the adenine in position 37 of tRNA(1)(Val) (anticodon cmo5UAC). This chain is tRNA1(Val) (adenine(37)-N6)-methyltransferase, found in Photobacterium profundum (strain SS9).